The following is a 301-amino-acid chain: Glutamyl-Q tRNA(Asp) synthetase (301 aa).

L-glutamate contacts are provided by residues 9–13 (RFAPS) and glutamate 45. The short motif at 12 to 22 (PSPTGPLHLGS) is the 'HIGH' region element. Zn(2+)-binding residues include cysteine 101, cysteine 103, tyrosine 121, and cysteine 125. L-glutamate contacts are provided by tyrosine 179 and arginine 197. A 'KMSKS' region motif is present at residues 235–239 (KLSKQ). Residue lysine 238 coordinates ATP.

This sequence belongs to the class-I aminoacyl-tRNA synthetase family. GluQ subfamily. Zn(2+) serves as cofactor.

Catalyzes the tRNA-independent activation of glutamate in presence of ATP and the subsequent transfer of glutamate onto a tRNA(Asp). Glutamate is transferred on the 2-amino-5-(4,5-dihydroxy-2-cyclopenten-1-yl) moiety of the queuosine in the wobble position of the QUC anticodon. In Thiobacillus denitrificans (strain ATCC 25259 / T1), this protein is Glutamyl-Q tRNA(Asp) synthetase.